Here is a 633-residue protein sequence, read N- to C-terminus: Glutamyl-tRNA(Gln) amidotransferase subunit E (633 aa).

This sequence belongs to the GatB/GatE family. GatE subfamily. In terms of assembly, heterodimer of GatD and GatE.

The catalysed reaction is L-glutamyl-tRNA(Gln) + L-glutamine + ATP + H2O = L-glutaminyl-tRNA(Gln) + L-glutamate + ADP + phosphate + H(+). Functionally, allows the formation of correctly charged Gln-tRNA(Gln) through the transamidation of misacylated Glu-tRNA(Gln) in organisms which lack glutaminyl-tRNA synthetase. The reaction takes place in the presence of glutamine and ATP through an activated gamma-phospho-Glu-tRNA(Gln). The GatDE system is specific for glutamate and does not act on aspartate. This is Glutamyl-tRNA(Gln) amidotransferase subunit E from Saccharolobus islandicus (strain L.S.2.15 / Lassen #1) (Sulfolobus islandicus).